The sequence spans 348 residues: Short-chain dehydrogenase fogG (348 aa).

Leu-51, Arg-75, Asp-100, and Asn-126 together coordinate NADP(+). Active-site proton donor residues include Ser-180 and Tyr-215. NADP(+) contacts are provided by Tyr-215 and Lys-219. Residue Lys-219 is the Lowers pKa of active site Tyr of the active site.

The protein belongs to the short-chain dehydrogenases/reductases (SDR) family.

Its pathway is secondary metabolite biosynthesis. Its function is as follows. Short-chain dehydrogenase; part of the gene cluster that mediates the biosynthesis of flavoglaucin and congeners (including aspergin, dihydroauroglaucin and auroglaucin), prenylated salicylaldehyde derivatives carrying a saturated or an unsaturated C-7 side chain. The PKS fogA releases the carboxylic acid (8E,10E,12E)-3,5,7-trihydroxytetradeca-8,10,12-trienoic acid as its product, as well as derivatives with one and two double bonds. FogA is indeed able to reduce the initial triketide, thus being at least partially responsible for the differently saturated heptyl side chains of flavoglaucin congeners. The oxidoreductases fogB, fogC and fogD modify the nascent polyketide in fogA-bound form and, together, fogA, fogB, fogC and fogD are necessary for the formation of the aromatic core and the cyclized PKS products are released as salicyl alcohols. In particular, fogB is responsible for oxidation of a hydroxyl group or reduction of remaining double bond(s) at the C-7 residue whereas fogD is probably involved in the reductive release of the modified PKS products. The cytochrome P450 monooxygenase fogE is then responsible for the hydroxylation at C-3 of the benzene ring. The fogE products are substrates of the prenyltransferase fogH and the prenylated benzyl alcohols are subsequently oxidized by the fogF to produce the final aryl aldehydes flavoglaucin and congeners. The short-chain dehydrogenase fogG does not seem to be involved in the biosynthesis of the prenylated salicylaldehyde derivatives. This Aspergillus ruber (strain CBS 135680) protein is Short-chain dehydrogenase fogG.